A 1195-amino-acid polypeptide reads, in one-letter code: Error-prone DNA polymerase (1195 aa).

A disordered region spans residues 1163 to 1195 (ALNGDRRDTPDAPAQRHRHPRDVRILPPSRDFH).

Belongs to the DNA polymerase type-C family. DnaE2 subfamily.

Its subcellular location is the cytoplasm. The enzyme catalyses DNA(n) + a 2'-deoxyribonucleoside 5'-triphosphate = DNA(n+1) + diphosphate. Its function is as follows. DNA polymerase involved in damage-induced mutagenesis and translesion synthesis (TLS). It is not the major replicative DNA polymerase. This Rhodopseudomonas palustris (strain ATCC BAA-98 / CGA009) protein is Error-prone DNA polymerase.